The chain runs to 249 residues: Phosphate import ATP-binding protein PstB 2 (249 aa).

An ABC transporter domain is found at 4–244 (FEVTHLNLFY…PKDHRTQGYV (241 aa)). Residue 36–43 (GPSGCGKS) participates in ATP binding.

Belongs to the ABC transporter superfamily. Phosphate importer (TC 3.A.1.7) family. The complex is composed of two ATP-binding proteins (PstB), two transmembrane proteins (PstC and PstA) and a solute-binding protein (PstS).

Its subcellular location is the cell inner membrane. The catalysed reaction is phosphate(out) + ATP + H2O = ADP + 2 phosphate(in) + H(+). Its function is as follows. Part of the ABC transporter complex PstSACB involved in phosphate import. Responsible for energy coupling to the transport system. The sequence is that of Phosphate import ATP-binding protein PstB 2 from Shewanella oneidensis (strain ATCC 700550 / JCM 31522 / CIP 106686 / LMG 19005 / NCIMB 14063 / MR-1).